The chain runs to 770 residues: Probable methyltransferase PMT25 (770 aa).

Over 1-17 the chain is Cytoplasmic; the sequence is MAMGKYSRVDGKKSSSY. The helical; Signal-anchor for type II membrane protein transmembrane segment at 18–38 threads the bilayer; that stretch reads GLTITIVLLLSLCLVGTWMFM. At 39-770 the chain is on the lumenal side; that stretch reads SSWSAPADSA…ETETIKSAIA (732 aa). A disordered region spans residues 44–238; the sequence is PADSAGYSST…SSISKDQSSY (195 aa). Over residues 55-79 the composition is skewed to basic and acidic residues; that stretch reads TAKDVSKNDLRKEEGDRDPKNFSDE. Residues asparagine 75 and asparagine 107 are each glycosylated (N-linked (GlcNAc...) asparagine). The span at 92–109 shows a compositional bias: polar residues; it reads QVKTDSENSAEGNQVNES. Basic and acidic residues-rich tracts occupy residues 110–124 and 131–177; these read SGEK…KESD and DGEK…KAEE. 2 N-linked (GlcNAc...) asparagine glycosylation sites follow: asparagine 163 and asparagine 178. 2 stretches are compositionally biased toward polar residues: residues 205 to 220 and 227 to 238; these read ESST…LVES and QQSSISKDQSSY. N-linked (GlcNAc...) asparagine glycans are attached at residues asparagine 244 and asparagine 363.

Belongs to the methyltransferase superfamily.

It localises to the golgi apparatus membrane. The sequence is that of Probable methyltransferase PMT25 from Arabidopsis thaliana (Mouse-ear cress).